The sequence spans 93 residues: Large ribosomal subunit protein uL23cy (93 aa).

The protein belongs to the universal ribosomal protein uL23 family. As to quaternary structure, part of the 50S ribosomal subunit.

It localises to the plastid. The protein localises to the chloroplast. Binds to 23S rRNA. This chain is Large ribosomal subunit protein uL23cy (rpl23-B), found in Sorghum bicolor (Sorghum).